A 190-amino-acid polypeptide reads, in one-letter code: GTP cyclohydrolase 1 (190 aa).

Zn(2+) is bound by residues C80, H83, and C151.

The protein belongs to the GTP cyclohydrolase I family. As to quaternary structure, toroid-shaped homodecamer, composed of two pentamers of five dimers.

The enzyme catalyses GTP + H2O = 7,8-dihydroneopterin 3'-triphosphate + formate + H(+). It participates in cofactor biosynthesis; 7,8-dihydroneopterin triphosphate biosynthesis; 7,8-dihydroneopterin triphosphate from GTP: step 1/1. The protein is GTP cyclohydrolase 1 (folE) of Rickettsia prowazekii (strain Madrid E).